The sequence spans 230 residues: Flagellar L-ring protein (230 aa).

The first 21 residues, 1 to 21 (MMLKTVLRLPVCAALLALAAG), serve as a signal peptide directing secretion. The N-palmitoyl cysteine moiety is linked to residue Cys-22. Residue Cys-22 is the site of S-diacylglycerol cysteine attachment. The segment at 34–53 (PLTAPPPPPPQPSARPNGSI) is disordered. Residues 36-46 (TAPPPPPPQPS) show a composition bias toward pro residues.

The protein belongs to the FlgH family. As to quaternary structure, the basal body constitutes a major portion of the flagellar organelle and consists of four rings (L,P,S, and M) mounted on a central rod.

It is found in the cell outer membrane. It localises to the bacterial flagellum basal body. Assembles around the rod to form the L-ring and probably protects the motor/basal body from shearing forces during rotation. The polypeptide is Flagellar L-ring protein (Bordetella bronchiseptica (strain ATCC BAA-588 / NCTC 13252 / RB50) (Alcaligenes bronchisepticus)).